We begin with the raw amino-acid sequence, 288 residues long: Thiamine-monophosphate kinase (288 aa).

Residues aspartate 20, threonine 30, and aspartate 32 each contribute to the Mg(2+) site. A substrate-binding site is contributed by aspartate 39. Residues aspartate 60 and aspartate 107 each coordinate Mg(2+). ATP is bound by residues 106–107 and arginine 130; that span reads GD. Residue aspartate 188 participates in Mg(2+) binding. Serine 190 contributes to the ATP binding site. Aspartate 191 lines the Mg(2+) pocket. Tryptophan 286 is a binding site for substrate.

This sequence belongs to the thiamine-monophosphate kinase family.

The enzyme catalyses thiamine phosphate + ATP = thiamine diphosphate + ADP. It functions in the pathway cofactor biosynthesis; thiamine diphosphate biosynthesis; thiamine diphosphate from thiamine phosphate: step 1/1. Functionally, catalyzes the ATP-dependent phosphorylation of thiamine-monophosphate (TMP) to form thiamine-pyrophosphate (TPP), the active form of vitamin B1. The sequence is that of Thiamine-monophosphate kinase from Halobacterium salinarum (strain ATCC 700922 / JCM 11081 / NRC-1) (Halobacterium halobium).